A 32-amino-acid chain; its full sequence is MIHMDIVSLAWAALMVVFTFSLSLVVWGRSGL.

The chain crosses the membrane as a helical span at residues 6–26; the sequence is IVSLAWAALMVVFTFSLSLVV.

Belongs to the PetN family. As to quaternary structure, the 4 large subunits of the cytochrome b6-f complex are cytochrome b6, subunit IV (17 kDa polypeptide, PetD), cytochrome f and the Rieske protein, while the 4 small subunits are PetG, PetL, PetM and PetN. The complex functions as a dimer.

The protein resides in the plastid. It localises to the chloroplast thylakoid membrane. Component of the cytochrome b6-f complex, which mediates electron transfer between photosystem II (PSII) and photosystem I (PSI), cyclic electron flow around PSI, and state transitions. The protein is Cytochrome b6-f complex subunit 8 of Illicium oligandrum (Star anise).